A 421-amino-acid chain; its full sequence is Histidine--tRNA ligase (421 aa).

It belongs to the class-II aminoacyl-tRNA synthetase family. In terms of assembly, homodimer.

It is found in the cytoplasm. It carries out the reaction tRNA(His) + L-histidine + ATP = L-histidyl-tRNA(His) + AMP + diphosphate + H(+). This is Histidine--tRNA ligase from Francisella tularensis subsp. holarctica (strain OSU18).